The primary structure comprises 242 residues: Uroporphyrinogen-III C-methyltransferase (242 aa).

Residues Pro12, 88–90 (GGD), 118–119 (TS), and Met170 contribute to the S-adenosyl-L-homocysteine site.

The protein belongs to the precorrin methyltransferase family. As to quaternary structure, homodimer.

The catalysed reaction is uroporphyrinogen III + 2 S-adenosyl-L-methionine = precorrin-2 + 2 S-adenosyl-L-homocysteine + H(+). The protein operates within cofactor biosynthesis; adenosylcobalamin biosynthesis; precorrin-2 from uroporphyrinogen III: step 1/1. Catalyzes the two successive C-2 and C-7 methylation reactions involved in the conversion of uroporphyrinogen III to precorrin-2 via the intermediate formation of precorrin-1. It is a step in the biosynthesis of both cobalamin (vitamin B12) and coenzyme F430. The chain is Uroporphyrinogen-III C-methyltransferase (cobA) from Methanocaldococcus jannaschii (strain ATCC 43067 / DSM 2661 / JAL-1 / JCM 10045 / NBRC 100440) (Methanococcus jannaschii).